A 549-amino-acid chain; its full sequence is Lipase 1 (549 aa).

A signal peptide spans 1 to 15 (MELALALSLIASVAA). The cysteines at positions 75 and 112 are disulfide-linked. Ser-224 acts as the Acyl-ester intermediate in catalysis. Cys-283 and Cys-292 are disulfide-bonded. An N-linked (GlcNAc...) asparagine glycan is attached at Asn-329. Glu-356 acts as the Charge relay system in catalysis. Residue Asn-366 is glycosylated (N-linked (GlcNAc...) asparagine). His-464 acts as the Charge relay system in catalysis.

It belongs to the type-B carboxylesterase/lipase family.

It carries out the reaction a triacylglycerol + H2O = a diacylglycerol + a fatty acid + H(+). The polypeptide is Lipase 1 (LIP1) (Diutina rugosa (Yeast)).